Here is a 434-residue protein sequence, read N- to C-terminus: Prenyltransferase penG (434 aa).

2 stretches are compositionally biased toward polar residues: residues 1–14 and 21–35; these read MTQDVVTVSSQTAG and THSNPDNKTTSPSTW. Residues 1 to 35 form a disordered region; that stretch reads MTQDVVTVSSQTAGTIKESGTHSNPDNKTTSPSTW. L-tryptophan contacts are provided by residues 104–105 and E108; that span reads EI. Substrate-binding residues include R122, K208, R275, K277, Y279, and Y348.

This sequence belongs to the tryptophan dimethylallyltransferase family.

The catalysed reaction is yaequinolone E + dimethylallyl diphosphate + H2O = [(1'E)-3'-hydroxy-3',7'-dimethylocta-1',6'-dien-1'-yl]-quinolinone B + diphosphate. It functions in the pathway secondary metabolite biosynthesis. It participates in alkaloid biosynthesis. The protein operates within mycotoxin biosynthesis. Prenyltransferase; part of the gene cluster that mediates the biosynthesis of penigequinolones, potent insecticidal alkaloids that contain a highly modified 10-carbon prenyl group. The first stage is catalyzed by the nonribosomal peptide synthetase penN that condenses anthranilic acid and O-methyl-L-tyrosine to produce 4'-methoxycyclopeptin. 4'-methoxycyclopeptin is then converted to 4'-methoxydehydrocyclopeptin by the ketoglutarate-dependent dioxygenase penM through dehydrogenation to form a double bond between C-alpha and C-beta of the O-methyltyrosine side chain. PenM also converts its first product methoxydehydrocyclopeptin to 4'-methoxycyclopenin. The following conversion of 4'methoxycyclopenin into 4'-methoxyviridicatin is catalyzed by the cyclopenase penL. 4'-methoxyviridicatin is the precursor of quinolone natural products, and is further converted to quinolinone B. The prenyltransferase penI then catalyzes the canonical Friedel-Crafts alkylation of quinolinone B with dimethylallyl cation to yield dimethylallyl quinolone, which is subjected to FAD-dependent dehydrogenation by the FAD-linked oxidoreductase penH to yield conjugated aryl diene. The delta(3') double bond then serves as the site of the second alkylation with DMAPP catalyzed by the prenyltransferase penG to yield a carbenium ion intermediate, which can be attacked by H(2)O to yield a styrenyl quinolone containing a C3'-hydroxyprenyl chain, or undergo cyclization to yield yaequinolones J1 and J2. The conversion of the styrenyl quinolone into the tetrahydrofuran-containing yaequinolone C is performed by the FAD-dependent monooxygenase penE and involves epoxidation of the terminal C7'-C8' olefin, followed by epoxide ring opening initiated by the C3' hydroxyl group. The predicted cysteine hydrolase penJ acts as an epoxide hydrolase that enhances the rate of the 5-exo-tet cyclization step, increasing the yield of yaequinolone C. PenF catalyzes the cationic rearrangement of the epoxide formed by penE (before ring opening to produce yaequinolone C) into yaequinolone D. Finally, the short-chain dehydrogenase/reductase (SDR)-like reductase penD, catalyzes both the dehydration of yaequinolone D and the reduction of the resulting oxonium to yield penigequinolone. The protein is Prenyltransferase penG of Penicillium thymicola.